The primary structure comprises 323 residues: Aspartate carbamoyltransferase catalytic subunit (323 aa).

Carbamoyl phosphate is bound by residues arginine 71 and threonine 72. Lysine 99 is an L-aspartate binding site. The carbamoyl phosphate site is built by arginine 121, histidine 151, and glutamine 154. L-aspartate-binding residues include arginine 184 and arginine 239. Residues glycine 280 and proline 281 each coordinate carbamoyl phosphate.

The protein belongs to the aspartate/ornithine carbamoyltransferase superfamily. ATCase family. In terms of assembly, heterododecamer (2C3:3R2) of six catalytic PyrB chains organized as two trimers (C3), and six regulatory PyrI chains organized as three dimers (R2).

It carries out the reaction carbamoyl phosphate + L-aspartate = N-carbamoyl-L-aspartate + phosphate + H(+). It participates in pyrimidine metabolism; UMP biosynthesis via de novo pathway; (S)-dihydroorotate from bicarbonate: step 2/3. Catalyzes the condensation of carbamoyl phosphate and aspartate to form carbamoyl aspartate and inorganic phosphate, the committed step in the de novo pyrimidine nucleotide biosynthesis pathway. This chain is Aspartate carbamoyltransferase catalytic subunit, found in Cupriavidus taiwanensis (strain DSM 17343 / BCRC 17206 / CCUG 44338 / CIP 107171 / LMG 19424 / R1) (Ralstonia taiwanensis (strain LMG 19424)).